Here is a 202-residue protein sequence, read N- to C-terminus: Glycoprotein U22 (202 aa).

Positions 1–20 (MVPQGCSLVWVSALYVSVIA) are cleaved as a signal peptide. Asn54, Asn107, Asn112, and Asn125 each carry an N-linked (GlcNAc...) asparagine; by host glycan. The helical transmembrane segment at 172–192 (FVYYCISVYLFAVVVLCSCWF) threads the bilayer.

Its subcellular location is the membrane. This is Glycoprotein U22 (U22) from Homo sapiens (Human).